The sequence spans 184 residues: Large ribosomal subunit protein uL5 (184 aa).

This sequence belongs to the universal ribosomal protein uL5 family. In terms of assembly, part of the 50S ribosomal subunit; part of the 5S rRNA/L5/L18/L25 subcomplex. Contacts the 5S rRNA and the P site tRNA. Forms a bridge to the 30S subunit in the 70S ribosome.

In terms of biological role, this is one of the proteins that bind and probably mediate the attachment of the 5S RNA into the large ribosomal subunit, where it forms part of the central protuberance. In the 70S ribosome it contacts protein S13 of the 30S subunit (bridge B1b), connecting the 2 subunits; this bridge is implicated in subunit movement. Contacts the P site tRNA; the 5S rRNA and some of its associated proteins might help stabilize positioning of ribosome-bound tRNAs. The protein is Large ribosomal subunit protein uL5 of Ureaplasma parvum serovar 3 (strain ATCC 27815 / 27 / NCTC 11736).